We begin with the raw amino-acid sequence, 1026 residues long: Tyrosine-protein phosphatase 1 (1026 aa).

In terms of domain architecture, FERM spans 29–315; it reads IRCTVTFLDS…EQHTFFRLKT (287 aa). Disordered regions lie at residues 376 to 396, 430 to 456, 489 to 515, and 584 to 616; these read SIDS…LPSS, PLTT…SLRQ, GIHA…KSAN, and SFAS…DQVV. Residues 446–456 are compositionally biased toward polar residues; sequence DSESSAPSLRQ. Residues 600 to 609 are compositionally biased toward low complexity; the sequence is SPQSNKSSSP. The PDZ domain occupies 617 to 689; it reads TIKMRPDRHG…DHVVQFIRSA (73 aa). Residues 753 to 1011 form the Tyrosine-protein phosphatase domain; sequence VVDHFEMLYR…TFVCESILRA (259 aa). Residues Asp-920, 952–958, and Gln-996 contribute to the substrate site; that span reads CSAGIGR. Cys-952 acts as the Phosphocysteine intermediate in catalysis.

This sequence belongs to the protein-tyrosine phosphatase family. Non-receptor class subfamily.

The protein localises to the cytoplasm. It is found in the cytoskeleton. It catalyses the reaction O-phospho-L-tyrosyl-[protein] + H2O = L-tyrosyl-[protein] + phosphate. The sequence is that of Tyrosine-protein phosphatase 1 (ptp-1) from Caenorhabditis elegans.